The sequence spans 351 residues: Flap endonuclease 1 (351 aa).

The segment at 1–98 (MDLAELVEEI…QELERRKKVK (98 aa)) is N-domain. Aspartate 27, aspartate 80, glutamate 154, glutamate 156, aspartate 175, aspartate 177, and aspartate 238 together coordinate Mg(2+). The interval 118-260 (ELKKYAQMSI…TAYRIIKKYG (143 aa)) is I-domain. The segment at 343–351 (RQTGLDQWF) is interaction with PCNA.

The protein belongs to the XPG/RAD2 endonuclease family. FEN1 subfamily. Interacts with PCNA. PCNA stimulates the nuclease activity without altering cleavage specificity. Requires Mg(2+) as cofactor.

In terms of biological role, structure-specific nuclease with 5'-flap endonuclease and 5'-3' exonuclease activities involved in DNA replication and repair. During DNA replication, cleaves the 5'-overhanging flap structure that is generated by displacement synthesis when DNA polymerase encounters the 5'-end of a downstream Okazaki fragment. Binds the unpaired 3'-DNA end and kinks the DNA to facilitate 5' cleavage specificity. Cleaves one nucleotide into the double-stranded DNA from the junction in flap DNA, leaving a nick for ligation. Also involved in the base excision repair (BER) pathway. Acts as a genome stabilization factor that prevents flaps from equilibrating into structures that lead to duplications and deletions. Also possesses 5'-3' exonuclease activity on nicked or gapped double-stranded DNA. The polypeptide is Flap endonuclease 1 (Sulfurisphaera tokodaii (strain DSM 16993 / JCM 10545 / NBRC 100140 / 7) (Sulfolobus tokodaii)).